Consider the following 205-residue polypeptide: MDTVIELSKLLHDEEFKDNASCTSTPTLKTARIIESAVTGITLTASVPMIIIVITTMILYHRVAKHNATSFYVITLFASDFVLMWCVFFMTVNREQLFSFNRFFCQLVYFIYHAVCSYSISMLAIIATIRYKTLHRRKQTESKTYSTGRNIGILLLASSMCAIPTALFVQINGAKKTTGKCVVYLSSPKAYELFLAVKIVFSFIW.

5 helical membrane-spanning segments follow: residues 40–60 (GITLTASVPMIIIVITTMILY), 71–91 (FYVITLFASDFVLMWCVFFMT), 107–127 (LVYFIYHAVCSYSISMLAIIA), 151–171 (IGILLLASSMCAIPTALFVQI), and 185–205 (LSSPKAYELFLAVKIVFSFIW). Residues cysteine 105 and cysteine 181 are joined by a disulfide bond.

Belongs to the G-protein coupled receptor 1 family.

The protein resides in the host membrane. The sequence is that of G-protein coupled receptor (U12) from Human herpesvirus 6B (strain Z29) (HHV-6 variant B).